Here is a 206-residue protein sequence, read N- to C-terminus: Ribosomal RNA small subunit methyltransferase G (206 aa).

S-adenosyl-L-methionine contacts are provided by residues glycine 73, leucine 78, 124–125, and arginine 139; that span reads VE.

The protein belongs to the methyltransferase superfamily. RNA methyltransferase RsmG family.

Its subcellular location is the cytoplasm. The enzyme catalyses guanosine(527) in 16S rRNA + S-adenosyl-L-methionine = N(7)-methylguanosine(527) in 16S rRNA + S-adenosyl-L-homocysteine. Functionally, specifically methylates the N7 position of guanine in position 527 of 16S rRNA. The protein is Ribosomal RNA small subunit methyltransferase G of Edwardsiella ictaluri (strain 93-146).